Consider the following 79-residue polypeptide: Sulfur carrier protein TusA (79 aa).

Cys-17 (cysteine persulfide intermediate) is an active-site residue.

This sequence belongs to the sulfur carrier protein TusA family.

Its subcellular location is the cytoplasm. In terms of biological role, sulfur carrier protein which probably makes part of a sulfur-relay system. This chain is Sulfur carrier protein TusA, found in Haemophilus influenzae (strain ATCC 51907 / DSM 11121 / KW20 / Rd).